The sequence spans 369 residues: Sulfate permease 2, chloroplastic (369 aa).

The segment at 1-21 (MASTTLLQPALGLPSRVGPRS) is disordered. The N-terminal 82 residues, 1-82 (MASTTLLQPA…QQSRGDLLVS (82 aa)), are a transit peptide targeting the chloroplast. 5 helical membrane-spanning segments follow: residues 110-130 (VGVA…NVFV), 156-176 (TLML…VAAI), 187-207 (VFLM…TGLM), 229-249 (VVFA…PFVV), and 335-355 (TEAA…TLWI). An ABC transmembrane type-1 domain is found at 153 to 356 (LKMTLMLAFV…ALALGTLWIK (204 aa)).

The protein belongs to the ATP-binding cassette (ABC) (TC 3.A.1) superfamily. In terms of assembly, part of the chloroplast sulfate permease holocomplex. May form a heterodimer with SLUP1.

Its subcellular location is the plastid. It is found in the chloroplast membrane. Functionally, part of the ABC-type chloroplast envelope-localized sulfate transporter. This chain is Sulfate permease 2, chloroplastic (SULP2), found in Chlamydomonas reinhardtii (Chlamydomonas smithii).